Here is a 942-residue protein sequence, read N- to C-terminus: Endoprotease bli-4 (942 aa).

The N-terminal stretch at 1 to 22 (MRISIGRIAWQILAVLIAVAFT) is a signal peptide. Positions 23–116 (IEHDSICDES…EQRPKKRVKR (94 aa)) are excised as a propeptide. Residues 117–871 (DYILLDNDVH…TLLIDSNKSS (755 aa)) are Lumenal-facing. Position 124 (Asp-124) interacts with Ca(2+). Positions 130–160 (PFRRSVLNRDGTRRAQRQQPQSPREIPSLPF) are disordered. The region spanning 168–483 (QWYLHGGAVG…YGLIDGGALV (316 aa)) is the Peptidase S8 domain. Asn-195 carries N-linked (GlcNAc...) asparagine glycosylation. Asp-202 (charge relay system) is an active-site residue. Position 203 (Asp-203) interacts with substrate. Ca(2+) is bound by residues Asp-211, Asp-223, Asp-228, and Asp-230. The tract at residues 211–242 (DLAANYDPLASTDINDHDDDPTPQNNGDNKHG) is disordered. Residue 238 to 239 (DN) coordinates substrate. His-241 acts as the Charge relay system in catalysis. Ca(2+) contacts are provided by Leu-252, Asn-255, Gln-257, and Gly-259. Disulfide bonds link Cys-258/Cys-407 and Cys-350/Cys-380. Residues Glu-283, 300-305 (SWGPED), Asp-311, and 339-342 (ASGN) contribute to the substrate site. Asp-305 is a Ca(2+) binding site. A Ca(2+)-binding site is contributed by Asp-348. The substrate site is built by Asp-353 and Tyr-355. Glu-378 contacts Ca(2+). Ser-415 (charge relay system) is an active-site residue. Ser-415 provides a ligand contact to substrate. One can recognise a P/Homo B domain in the interval 491 to 629 (TVPEQHICTY…TLLLYGTADP (139 aa)). Cys-498 and Cys-527 are disulfide-bonded. N-linked (GlcNAc...) asparagine glycosylation occurs at Asn-519. FU repeat units lie at residues 674-723 (NCHD…YYLD), 725-777 (DKCK…LVAD), and 804-850 (GKCD…STKS). Asn-868 is a glycosylation site (N-linked (GlcNAc...) asparagine). A helical transmembrane segment spans residues 872 to 892 (GFGLMFWIVVSLIAACGICAC). At 893–942 (KKCASETKSSNVEYAPLAQYNATNGAINLGAHTDDEDDDEDEVFVNPQIV) the chain is on the cytoplasmic side. The segment at 922–942 (GAHTDDEDDDEDEVFVNPQIV) is disordered. Acidic residues predominate over residues 926-935 (DDEDDDEDEV).

This sequence belongs to the peptidase S8 family. Furin subfamily. Ca(2+) is required as a cofactor. In larvae and adults, expressed in all hypodermal cells, vulva and ventral nerve cords. As to expression, most highly expressed isoform in the embryonic epidermis. In terms of tissue distribution, expressed primarily in the germline. Expressed primarily in pharyngeal epithelial cells.

The protein resides in the membrane. Serine endoprotease which cleaves proproteins at paired basic amino acids at the consensus RX(K/R)R motif. Involved in N-terminal processing of cuticle collagens and plays a role in cuticle biosynthesis. May cleave both sqt-3 and dpy-17 collagens to promote their secretion. Acts in ASEL sensory neurons to regulate high salt chemotaxis responses probably by cleaving insulin-like protein ins-6 into its mature and active form. Essential for embryonic and larval development. In terms of biological role, involved in cuticle biosynthesis but dispensable for larval development. The protein is Endoprotease bli-4 (bli-4) of Caenorhabditis elegans.